The primary structure comprises 902 residues: 4-hydroxyphenylacetate decarboxylase glycyl radical subunit (902 aa).

The 737-residue stretch at 38-774 (KRAEDLLDVY…ATLATPDGRL (737 aa)) folds into the PFL domain. 4-hydroxyphenylacetate is bound by residues Ser-348 and Cys-507. The active-site Cysteine radical intermediate is Cys-507. The Proton donor role is filled by Glu-509. 4-hydroxyphenylacetate contacts are provided by His-540 and Glu-641. The 121-residue stretch at 782–902 (GSVSAYAGTD…VIARTEYEGV (121 aa)) folds into the Glycine radical domain. Gly-877 is subject to Glycine radical.

It belongs to the glycyl radical enzyme (GRE) family. HPAD subfamily. As to quaternary structure, heterooctamer consisting of 4 large (HpdB) subunits and 4 small (HpdC) subunits. Also forms a catalytically inactive homodimer. Post-translationally, phosphorylated on serine. Phosphorylation may trigger the formation of the active heterooctamers and thereby regulates enzyme activity. Requires the activating protein HpdA to generate the key active site glycyl radical that is involved in catalysis.

The enzyme catalyses 4-hydroxyphenylacetate + H(+) = 4-methylphenol + CO2. It catalyses the reaction 3,4-dihydroxyphenylacetate + H(+) = 4-methylcatechol + CO2. The catalysed reaction is 2-hydroxy-2-(4-hydroxyphenyl)acetate + H(+) = 4-hydroxybenzyl alcohol + CO2. With respect to regulation, enzyme activity catalyzed by the HPA decarboxylase complex is rapidly and irreversibly inactivated by oxygen. Competitively inhibited by p-hydroxyphenylacetamide. Not inhibited by m- or o-hydroxyphenyl-acetate, p-hydroxybenzoate or p-hydroxyphenylpropionate. Glycyl radical subunit of the HPA decarboxylase that decarboxylates phenylacetates with a hydroxyl group in the p-position. Active toward 4-hydroxyphenylacetate, 3,4-dihydroxyphenylacetate and to a lesser extent p-hydroxymandelate (2-hydroxy-2-(4-hydroxyphenyl)acetate), forming 4-methylphenol, 4-methylcatechol and 4-hydroxybenzylalcohol, respectively. Is likely involved in the catabolism of aromatic amino acids such as tyrosine fermentation. 4-methylphenol (p-cresol) formation provides metabolic toxicity, which may benefit the pathogen C.difficile by suppression of the endogenous gastrointestinal microflora, allowing the development of gastrointestinal infections. The large subunit is the catalytic subunit that binds the substrate. The sequence is that of 4-hydroxyphenylacetate decarboxylase glycyl radical subunit from Clostridioides difficile (Peptoclostridium difficile).